The chain runs to 97 residues: Aspartyl/glutamyl-tRNA(Asn/Gln) amidotransferase subunit C (97 aa).

The interval 74–97 (AEQALDQAPASQRDRFEVPRILGE) is disordered. The span at 85–97 (QRDRFEVPRILGE) shows a compositional bias: basic and acidic residues.

The protein belongs to the GatC family. Heterotrimer of A, B and C subunits.

The enzyme catalyses L-glutamyl-tRNA(Gln) + L-glutamine + ATP + H2O = L-glutaminyl-tRNA(Gln) + L-glutamate + ADP + phosphate + H(+). It catalyses the reaction L-aspartyl-tRNA(Asn) + L-glutamine + ATP + H2O = L-asparaginyl-tRNA(Asn) + L-glutamate + ADP + phosphate + 2 H(+). In terms of biological role, allows the formation of correctly charged Asn-tRNA(Asn) or Gln-tRNA(Gln) through the transamidation of misacylated Asp-tRNA(Asn) or Glu-tRNA(Gln) in organisms which lack either or both of asparaginyl-tRNA or glutaminyl-tRNA synthetases. The reaction takes place in the presence of glutamine and ATP through an activated phospho-Asp-tRNA(Asn) or phospho-Glu-tRNA(Gln). The protein is Aspartyl/glutamyl-tRNA(Asn/Gln) amidotransferase subunit C of Corynebacterium kroppenstedtii (strain DSM 44385 / JCM 11950 / CIP 105744 / CCUG 35717).